The following is a 395-amino-acid chain: uncharacterized protein (395 aa).

10 helical membrane-spanning segments follow: residues 19-39 (IGIA…IAII), 49-69 (VLLI…IYEL), 87-107 (LTWI…AVGG), 137-157 (LVII…PLGT), 172-192 (YINL…FYLI), 206-226 (TINI…SLIA), 252-272 (LIGG…MGMG), 279-299 (LFIM…KILA), 311-331 (GLVF…GSLI), and 359-379 (VLCT…GAVI).

It belongs to the chloride channel (TC 2.A.49) family.

The protein resides in the cell membrane. This is an uncharacterized protein from Methanocaldococcus jannaschii (strain ATCC 43067 / DSM 2661 / JAL-1 / JCM 10045 / NBRC 100440) (Methanococcus jannaschii).